Reading from the N-terminus, the 428-residue chain is Serine--tRNA ligase (428 aa).

235–237 (TAE) lines the L-serine pocket. Residue 266-268 (RSE) participates in ATP binding. An L-serine-binding site is contributed by glutamate 289. 353 to 356 (EISS) provides a ligand contact to ATP. An L-serine-binding site is contributed by serine 389.

It belongs to the class-II aminoacyl-tRNA synthetase family. Type-1 seryl-tRNA synthetase subfamily. Homodimer. The tRNA molecule binds across the dimer.

The protein localises to the cytoplasm. It catalyses the reaction tRNA(Ser) + L-serine + ATP = L-seryl-tRNA(Ser) + AMP + diphosphate + H(+). It carries out the reaction tRNA(Sec) + L-serine + ATP = L-seryl-tRNA(Sec) + AMP + diphosphate + H(+). It participates in aminoacyl-tRNA biosynthesis; selenocysteinyl-tRNA(Sec) biosynthesis; L-seryl-tRNA(Sec) from L-serine and tRNA(Sec): step 1/1. Its function is as follows. Catalyzes the attachment of serine to tRNA(Ser). Is also able to aminoacylate tRNA(Sec) with serine, to form the misacylated tRNA L-seryl-tRNA(Sec), which will be further converted into selenocysteinyl-tRNA(Sec). In Shewanella sediminis (strain HAW-EB3), this protein is Serine--tRNA ligase.